The following is a 301-amino-acid chain: NAD kinase 2 (301 aa).

Catalysis depends on D77, which acts as the Proton acceptor. Residues 77-78 (DG), R82, 151-152 (NE), R162, D181, and 192-197 (TAYAFS) each bind NAD(+).

It belongs to the NAD kinase family. A divalent metal cation is required as a cofactor.

Its subcellular location is the cytoplasm. The catalysed reaction is NAD(+) + ATP = ADP + NADP(+) + H(+). Its function is as follows. Involved in the regulation of the intracellular balance of NAD and NADP, and is a key enzyme in the biosynthesis of NADP. Catalyzes specifically the phosphorylation on 2'-hydroxyl of the adenosine moiety of NAD to yield NADP. The sequence is that of NAD kinase 2 from Streptomyces avermitilis (strain ATCC 31267 / DSM 46492 / JCM 5070 / NBRC 14893 / NCIMB 12804 / NRRL 8165 / MA-4680).